Consider the following 385-residue polypeptide: MAKRDYYEVLGVSKGASADEIKKGFRTKAKELHPDRNADNPEAESQFKEANEAYDVLKDADKKAAYDRFGHAAFDGGMAGGPRGGGGQGQGDFASAFSDVFEDLFGDFMGGQRGRPGGARTQATRGSDLRYNLSITLEDAYNGLSKQITVPSSVACSSCDGTGSEAGAEPTSCPTCSGMGKVRAQQGFFTVERTCPTCNGMGQIVKNPCRTCGGAGRQEKDRALSVNIPAGVETGTRIRLSGEGEAGLRGGPAGDLYIFVEVQDHALFQRDGMDLFCRVPVSMVSAALGGEIEVPSIDGGRSRVRVPEGSQSGRQMRLRGKGMPALRGPGLGEMYIELMVETPVNLTGDQAELLRQFEESCKKTNNPNASGFFDKVKSFWDKVRD.

A J domain is found at 5-70; the sequence is DYYEVLGVSK…DKKAAYDRFG (66 aa). Residues 143–221 form a CR-type zinc finger; it reads GLSKQITVPS…CGGAGRQEKD (79 aa). Zn(2+)-binding residues include cysteine 156, cysteine 159, cysteine 173, cysteine 176, cysteine 195, cysteine 198, cysteine 209, and cysteine 212. CXXCXGXG motif repeat units lie at residues 156-163, 173-180, 195-202, and 209-216; these read CSSCDGTG, CPTCSGMG, CPTCNGMG, and CRTCGGAG. The segment at 299–323 is disordered; that stretch reads GGRSRVRVPEGSQSGRQMRLRGKGM.

Belongs to the DnaJ family. Homodimer. Zn(2+) serves as cofactor.

It localises to the cytoplasm. In terms of biological role, participates actively in the response to hyperosmotic and heat shock by preventing the aggregation of stress-denatured proteins and by disaggregating proteins, also in an autonomous, DnaK-independent fashion. Unfolded proteins bind initially to DnaJ; upon interaction with the DnaJ-bound protein, DnaK hydrolyzes its bound ATP, resulting in the formation of a stable complex. GrpE releases ADP from DnaK; ATP binding to DnaK triggers the release of the substrate protein, thus completing the reaction cycle. Several rounds of ATP-dependent interactions between DnaJ, DnaK and GrpE are required for fully efficient folding. Also involved, together with DnaK and GrpE, in the DNA replication of plasmids through activation of initiation proteins. In Jannaschia sp. (strain CCS1), this protein is Chaperone protein DnaJ.